Here is a 528-residue protein sequence, read N- to C-terminus: Linear primary-alkylsulfatase (528 aa).

The Zn(2+) site is built by H42, H44, D46, H47, E151, and E170. Residues 179–184 and R189 each bind sulfate; that span reads NVHTLR. H213 provides a ligand contact to Zn(2+). Y275 lines the sulfate pocket.

The protein belongs to the metallo-beta-lactamase superfamily. Type III sulfatase family. The cofactor is Zn(2+).

It carries out the reaction a primary linear alkyl sulfate ester + H2O = a primary alcohol + sulfate + H(+). In terms of biological role, alkylsulfatase that cleaves the widely used detergent sodium dodecyl sulfate (SDS), which allows the bacterium to use SDS as a sole carbon or sulfur source. The sequence is that of Linear primary-alkylsulfatase from Pseudomonas sp. (strain ATCC 19151).